A 289-amino-acid chain; its full sequence is Putative transmembrane protein ORF111 (289 aa).

A run of 5 helical transmembrane segments spans residues 1–21, 112–132, 151–171, 189–209, and 261–281; these read MIGP…IFML, AIIT…VCIA, IGIT…FIVI, LNIS…TSIL, and YLLT…IGVG.

Its subcellular location is the host membrane. This is Putative transmembrane protein ORF111 from Ostreid herpesvirus 1 (isolate France) (OsHV-1).